Here is a 630-residue protein sequence, read N- to C-terminus: tRNA uridine 5-carboxymethylaminomethyl modification enzyme MnmG (630 aa).

Residue 13 to 18 (GGGHAG) coordinates FAD. 273-287 (GPRYCPSIEDKIHRF) provides a ligand contact to NAD(+).

This sequence belongs to the MnmG family. Homodimer. Heterotetramer of two MnmE and two MnmG subunits. The cofactor is FAD.

The protein localises to the cytoplasm. In terms of biological role, NAD-binding protein involved in the addition of a carboxymethylaminomethyl (cmnm) group at the wobble position (U34) of certain tRNAs, forming tRNA-cmnm(5)s(2)U34. This Pseudomonas putida (Arthrobacter siderocapsulatus) protein is tRNA uridine 5-carboxymethylaminomethyl modification enzyme MnmG.